The sequence spans 249 residues: ATP synthase subunit a (249 aa).

A run of 5 helical transmembrane segments spans residues 35–55 (ILLTSWFVIALILLAAFISSL), 92–112 (VPFIGTLFLFIFVSNWSGALV), 131–151 (INTTVALALLTSIAYFYAGIS), 187–209 (LFGNILADELVVGVLVLLVPLFI), and 221–241 (SAIQALIFATLAANYIGEALE).

The protein belongs to the ATPase A chain family. In terms of assembly, F-type ATPases have 2 components, CF(1) - the catalytic core - and CF(0) - the membrane proton channel. CF(1) has five subunits: alpha(3), beta(3), gamma(1), delta(1), epsilon(1). CF(0) has four main subunits: a, b, b' and c.

The protein localises to the cellular thylakoid membrane. Key component of the proton channel; it plays a direct role in the translocation of protons across the membrane. In Trichodesmium erythraeum (strain IMS101), this protein is ATP synthase subunit a.